The primary structure comprises 387 residues: 3-ketoacyl-CoA thiolase (387 aa).

Catalysis depends on cysteine 91, which acts as the Acyl-thioester intermediate. Residues histidine 343 and cysteine 373 each act as proton acceptor in the active site.

Belongs to the thiolase-like superfamily. Thiolase family. Heterotetramer of two alpha chains (FadB) and two beta chains (FadA).

It localises to the cytoplasm. The catalysed reaction is an acyl-CoA + acetyl-CoA = a 3-oxoacyl-CoA + CoA. Its pathway is lipid metabolism; fatty acid beta-oxidation. Functionally, catalyzes the final step of fatty acid oxidation in which acetyl-CoA is released and the CoA ester of a fatty acid two carbons shorter is formed. In Shewanella sp. (strain MR-4), this protein is 3-ketoacyl-CoA thiolase.